Here is a 488-residue protein sequence, read N- to C-terminus: Protein nucleotidyltransferase YdiU (488 aa).

Gly-91, Gly-93, Arg-94, Lys-114, Asp-126, Gly-127, Arg-177, and Arg-184 together coordinate ATP. The active-site Proton acceptor is Asp-253. Asn-254 and Asp-263 together coordinate Mg(2+). Asp-263 lines the ATP pocket.

The protein belongs to the SELO family. The cofactor is Mg(2+). Mn(2+) serves as cofactor.

It carries out the reaction L-seryl-[protein] + ATP = 3-O-(5'-adenylyl)-L-seryl-[protein] + diphosphate. The enzyme catalyses L-threonyl-[protein] + ATP = 3-O-(5'-adenylyl)-L-threonyl-[protein] + diphosphate. The catalysed reaction is L-tyrosyl-[protein] + ATP = O-(5'-adenylyl)-L-tyrosyl-[protein] + diphosphate. It catalyses the reaction L-histidyl-[protein] + UTP = N(tele)-(5'-uridylyl)-L-histidyl-[protein] + diphosphate. It carries out the reaction L-seryl-[protein] + UTP = O-(5'-uridylyl)-L-seryl-[protein] + diphosphate. The enzyme catalyses L-tyrosyl-[protein] + UTP = O-(5'-uridylyl)-L-tyrosyl-[protein] + diphosphate. Functionally, nucleotidyltransferase involved in the post-translational modification of proteins. It can catalyze the addition of adenosine monophosphate (AMP) or uridine monophosphate (UMP) to a protein, resulting in modifications known as AMPylation and UMPylation. In Bacillus cereus (strain ZK / E33L), this protein is Protein nucleotidyltransferase YdiU.